The chain runs to 213 residues: Pyridoxine/pyridoxamine 5'-phosphate oxidase (213 aa).

Residues 60–65 (RMVLMK), 75–76 (YS), Lys82, and Gln104 contribute to the FMN site. A substrate-binding site is contributed by Lys65. Residues Tyr122 and Arg126 each contribute to the substrate site. FMN-binding positions include 139–140 (QS) and Trp184. 190 to 192 (RLH) contacts substrate. Arg194 contributes to the FMN binding site.

It belongs to the pyridoxamine 5'-phosphate oxidase family. As to quaternary structure, homodimer. Requires FMN as cofactor.

The catalysed reaction is pyridoxamine 5'-phosphate + O2 + H2O = pyridoxal 5'-phosphate + H2O2 + NH4(+). It catalyses the reaction pyridoxine 5'-phosphate + O2 = pyridoxal 5'-phosphate + H2O2. It participates in cofactor metabolism; pyridoxal 5'-phosphate salvage; pyridoxal 5'-phosphate from pyridoxamine 5'-phosphate: step 1/1. The protein operates within cofactor metabolism; pyridoxal 5'-phosphate salvage; pyridoxal 5'-phosphate from pyridoxine 5'-phosphate: step 1/1. Functionally, catalyzes the oxidation of either pyridoxine 5'-phosphate (PNP) or pyridoxamine 5'-phosphate (PMP) into pyridoxal 5'-phosphate (PLP). This is Pyridoxine/pyridoxamine 5'-phosphate oxidase from Nitrobacter winogradskyi (strain ATCC 25391 / DSM 10237 / CIP 104748 / NCIMB 11846 / Nb-255).